Here is a 246-residue protein sequence, read N- to C-terminus: UPF0246 protein str1967 (246 aa).

The protein belongs to the UPF0246 family.

This is UPF0246 protein str1967 from Streptococcus thermophilus (strain CNRZ 1066).